The sequence spans 22 residues: Mu-conotoxin MIIIA (22 aa).

At Gln1 the chain carries Pyrrolidone carboxylic acid. Cystine bridges form between Cys3/Cys15, Cys4/Cys21, and Cys10/Cys22. A Cysteine amide modification is found at Cys22.

The protein belongs to the conotoxin M superfamily. Expressed by the venom duct.

It is found in the secreted. Mu-conotoxins block voltage-gated sodium channels (Nav). This synthetic toxin potently blocks rNav1.3/SCN3A. It also moderately blocks rNav1.1/SCN1A, rNav1.2/SCN2A, rNav1.4/SCN4A, mNav1.6/SCN8A, and Nav1.7/SCN9A. sodium channels. This block is very slowly reversible. In Conus magus (Magical cone), this protein is Mu-conotoxin MIIIA.